The following is a 476-amino-acid chain: Bifunctional protein HldE (476 aa).

Residues 1–319 are ribokinase; that stretch reads MKITLPEYDK…ANAVYSQQEI (319 aa). 196–199 serves as a coordination point for ATP; sequence NLAE. The active site involves Asp265. Positions 345–476 are cytidylyltransferase; sequence MTNGCFDILH…EIIKTIRNNS (132 aa).

It in the N-terminal section; belongs to the carbohydrate kinase PfkB family. In the C-terminal section; belongs to the cytidylyltransferase family. In terms of assembly, homodimer.

It carries out the reaction D-glycero-beta-D-manno-heptose 7-phosphate + ATP = D-glycero-beta-D-manno-heptose 1,7-bisphosphate + ADP + H(+). The enzyme catalyses D-glycero-beta-D-manno-heptose 1-phosphate + ATP + H(+) = ADP-D-glycero-beta-D-manno-heptose + diphosphate. Its pathway is nucleotide-sugar biosynthesis; ADP-L-glycero-beta-D-manno-heptose biosynthesis; ADP-L-glycero-beta-D-manno-heptose from D-glycero-beta-D-manno-heptose 7-phosphate: step 1/4. It functions in the pathway nucleotide-sugar biosynthesis; ADP-L-glycero-beta-D-manno-heptose biosynthesis; ADP-L-glycero-beta-D-manno-heptose from D-glycero-beta-D-manno-heptose 7-phosphate: step 3/4. Catalyzes the phosphorylation of D-glycero-D-manno-heptose 7-phosphate at the C-1 position to selectively form D-glycero-beta-D-manno-heptose-1,7-bisphosphate. Its function is as follows. Catalyzes the ADP transfer from ATP to D-glycero-beta-D-manno-heptose 1-phosphate, yielding ADP-D-glycero-beta-D-manno-heptose. The sequence is that of Bifunctional protein HldE from Psychromonas ingrahamii (strain DSM 17664 / CCUG 51855 / 37).